A 609-amino-acid chain; its full sequence is Glutamine--fructose-6-phosphate aminotransferase [isomerizing] (609 aa).

The active-site Nucleophile; for GATase activity is C2. One can recognise a Glutamine amidotransferase type-2 domain in the interval 2-218 (CGIVGAIAQR…EGDIAEITRR (217 aa)). 2 SIS domains span residues 286 to 426 (ADDL…LKGL) and 458 to 599 (LAED…VDQP). K604 acts as the For Fru-6P isomerization activity in catalysis.

Homodimer.

The protein localises to the cytoplasm. The catalysed reaction is D-fructose 6-phosphate + L-glutamine = D-glucosamine 6-phosphate + L-glutamate. Functionally, catalyzes the first step in hexosamine metabolism, converting fructose-6P into glucosamine-6P using glutamine as a nitrogen source. In Salmonella typhi, this protein is Glutamine--fructose-6-phosphate aminotransferase [isomerizing].